A 319-amino-acid chain; its full sequence is Formimidoylglutamase (319 aa).

Residues His127, Asp150, His152, Asp154, Asp242, and Asp244 each contribute to the Mn(2+) site.

Belongs to the arginase family. Mn(2+) serves as cofactor.

It carries out the reaction N-formimidoyl-L-glutamate + H2O = formamide + L-glutamate. Its pathway is amino-acid degradation; L-histidine degradation into L-glutamate; L-glutamate from N-formimidoyl-L-glutamate (hydrolase route): step 1/1. Its function is as follows. Catalyzes the conversion of N-formimidoyl-L-glutamate to L-glutamate and formamide. In Halalkalibacterium halodurans (strain ATCC BAA-125 / DSM 18197 / FERM 7344 / JCM 9153 / C-125) (Bacillus halodurans), this protein is Formimidoylglutamase.